Here is a 287-residue protein sequence, read N- to C-terminus: ATP synthase gamma chain (287 aa).

Belongs to the ATPase gamma chain family. In terms of assembly, F-type ATPases have 2 components, CF(1) - the catalytic core - and CF(0) - the membrane proton channel. CF(1) has five subunits: alpha(3), beta(3), gamma(1), delta(1), epsilon(1). CF(0) has three main subunits: a, b and c.

It is found in the cell inner membrane. In terms of biological role, produces ATP from ADP in the presence of a proton gradient across the membrane. The gamma chain is believed to be important in regulating ATPase activity and the flow of protons through the CF(0) complex. The protein is ATP synthase gamma chain of Tolumonas auensis (strain DSM 9187 / NBRC 110442 / TA 4).